Consider the following 231-residue polypeptide: Large ribosomal subunit protein uL1 (231 aa).

The protein belongs to the universal ribosomal protein uL1 family. In terms of assembly, part of the 50S ribosomal subunit.

In terms of biological role, binds directly to 23S rRNA. The L1 stalk is quite mobile in the ribosome, and is involved in E site tRNA release. Protein L1 is also a translational repressor protein, it controls the translation of the L11 operon by binding to its mRNA. The sequence is that of Large ribosomal subunit protein uL1 from Buchnera aphidicola subsp. Acyrthosiphon pisum (strain APS) (Acyrthosiphon pisum symbiotic bacterium).